Consider the following 214-residue polypeptide: Thymidylate kinase (214 aa).

ATP is bound at residue 11–18; the sequence is GPEGAGKT.

It belongs to the thymidylate kinase family.

It carries out the reaction dTMP + ATP = dTDP + ADP. Phosphorylation of dTMP to form dTDP in both de novo and salvage pathways of dTTP synthesis. This Leuconostoc citreum (strain KM20) protein is Thymidylate kinase.